A 138-amino-acid chain; its full sequence is MSSAGGGGGRGKSKGSKSVSRSSKAGLQFPVGRIARYLKAGKYAERVGAGAPVYLSAVLEYLAAEVLELAGNAARDNKKNRIVPRHIQLAVRNDEELSRLLGAVTIAAGGVLPNIHQTLLPKKGGKDKADIGSASQEF.

Over residues M1 to R10 the composition is skewed to gly residues. A disordered region spans residues M1–K24. At S135 the chain carries Phosphoserine; by ATM and ATR. Residues S135–Q136 carry the [ST]-Q motif motif.

The protein belongs to the histone H2A family. In terms of assembly, the nucleosome is a histone octamer containing two molecules each of H2A, H2B, H3 and H4 assembled in one H3-H4 heterotetramer and two H2A-H2B heterodimers. The octamer wraps approximately 147 bp of DNA. Interacts with numerous proteins required for DNA damage signaling and repair when phosphorylated on Ser-135. Phosphorylated to form H2AXS139ph (gamma-H2AX) in response to DNA double strand breaks (DSBs) generated by exogenous genotoxic agents and by stalled replication forks, and may also occur during meiotic recombination events. Phosphorylation can extend up to several thousand nucleosomes from the actual site of the DSB and may mark the surrounding chromatin for recruitment of proteins required for DNA damage signaling and repair. Widespread phosphorylation may also serve to amplify the damage signal or aid repair of persistent lesions. H2AXS139ph in response to ionizing radiation is mediated by ATM while defects in DNA replication induce H2AXS139ph subsequent to activation of ATR. Dephosphorylation of H2AXS139ph by PP2A is required for DNA DSB repair.

The protein resides in the nucleus. The protein localises to the chromosome. Variant histone H2A which replaces conventional H2A in a subset of nucleosomes. Nucleosomes wrap and compact DNA into chromatin, limiting DNA accessibility to the cellular machineries which require DNA as a template. Histones thereby play a central role in transcription regulation, DNA repair, DNA replication and chromosomal stability. DNA accessibility is regulated via a complex set of post-translational modifications of histones, also called histone code, and nucleosome remodeling. Required for checkpoint-mediated arrest of cell cycle progression in response to low doses of ionizing radiation and for efficient repair of DNA double strand breaks (DSBs) specifically when modified by C-terminal phosphorylation. The protein is Probable histone H2AXb of Oryza sativa subsp. indica (Rice).